The primary structure comprises 553 residues: Urocanate hydratase (553 aa).

NAD(+) contacts are provided by residues 51-52 (GG), Gln-129, 175-177 (GMG), Glu-195, Arg-200, 241-242 (NA), 262-266 (QTSAH), 272-273 (YL), and Tyr-321. Cys-409 is an active-site residue. NAD(+) is bound at residue Gly-491.

The protein belongs to the urocanase family. The cofactor is NAD(+).

Its subcellular location is the cytoplasm. The catalysed reaction is 4-imidazolone-5-propanoate = trans-urocanate + H2O. Its pathway is amino-acid degradation; L-histidine degradation into L-glutamate; N-formimidoyl-L-glutamate from L-histidine: step 2/3. Its function is as follows. Catalyzes the conversion of urocanate to 4-imidazolone-5-propionate. The chain is Urocanate hydratase from Sphingopyxis alaskensis (strain DSM 13593 / LMG 18877 / RB2256) (Sphingomonas alaskensis).